A 1132-amino-acid chain; its full sequence is NUT family member 1 (1132 aa).

Disordered stretches follow at residues 1–56, 337–365, 383–405, 476–584, 693–714, 873–892, and 922–1017; these read MASD…SVFS, AASK…EIPP, LATG…EGMY, EEED…VERR, RGTP…GERD, DASS…NSFS, and PLNV…DEEL. The segment covering 21 to 36 has biased composition (pro residues); the sequence is APSPSPALPFLPPTSD. Residues 337–352 show a composition bias toward basic residues; that stretch reads AASKTRAPRRRQRKAQ. The span at 395-404 shows a compositional bias: acidic residues; the sequence is EGQQQEEEGM. 3 stretches are compositionally biased toward polar residues: residues 487 to 497, 697 to 706, and 883 to 892; these read SGAQLDSSPSG, MAQSYDQNPS, and EAGSRGNSFS. Positions 932 to 942 are enriched in basic and acidic residues; it reads GEGRVDPDLSK. Positions 950–971 are enriched in polar residues; sequence QESQESYTTGTPKATSSHQGLG. Residues Ser-1026, Ser-1029, and Ser-1031 each carry the phosphoserine modification. The tract at residues 1031–1132 is disordered; it reads SPREHPLSPH…GRRKKRRRSQ (102 aa). Gln-1046 is modified (N5-methylglutamine). The segment covering 1123–1132 has biased composition (basic residues); it reads GRRKKRRRSQ.

Belongs to the NUT family. Methylated at Gln-1046 by N6AMT1. In terms of processing, phosphorylation on Ser-1026, Ser-1029 or Ser-1031 is important for cytoplasmic export. In terms of tissue distribution, specifically expressed in testis.

It is found in the cytoplasm. Its subcellular location is the nucleus. Plays a role in the regulation of proliferation. Regulates TERT expression by modulating SP1 binding to TERT promoter binding sites. This is NUT family member 1 from Homo sapiens (Human).